The sequence spans 89 residues: Small ribosomal subunit protein bS20 (89 aa).

The protein belongs to the bacterial ribosomal protein bS20 family.

Binds directly to 16S ribosomal RNA. The protein is Small ribosomal subunit protein bS20 of Wolbachia pipientis wMel.